A 110-amino-acid polypeptide reads, in one-letter code: uncharacterized protein (110 aa).

The N-terminal stretch at 1–16 (MKKILLIASMTAGLTA) is a signal peptide. A lipid anchor (N-palmitoyl cysteine) is attached at cysteine 17. Cysteine 17 carries S-diacylglycerol cysteine lipidation.

The protein localises to the cell membrane. This is an uncharacterized protein from Salmonella typhimurium (strain LT2 / SGSC1412 / ATCC 700720).